Consider the following 44-residue polypeptide: Capsid protein G8P (44 aa).

At 1-18 the chain is on the periplasmic side; that stretch reads MQSVITDVTGQLTAVQAD. A helical membrane pass occupies residues 19–39; sequence ITTIGGAIIVLAAVVLGIRWI. Residues 40 to 44 are Cytoplasmic-facing; sequence KAQFF.

This sequence belongs to the inovirus capsid protein family. In terms of assembly, homomultimerizes. There are several thousand copies of this protein in the phage capsid.

It localises to the virion. The protein localises to the host cell inner membrane. Its function is as follows. Self assembles to form a helical capsid wrapping up the viral genomic DNA. The capsid displays a filamentous structure with a length of 760-1950 nm and a width of 6-8 nm. The virion assembly and budding take place at the host inner membrane. The polypeptide is Capsid protein G8P (VIII) (Pseudomonas aeruginosa (Bacteriophage Pf3)).